A 357-amino-acid polypeptide reads, in one-letter code: Protein-glutamate methylesterase/protein-glutamine glutaminase 1 (357 aa).

The region spanning 7-124 (KVLCVDDSAL…REGLLDYTQT (118 aa)) is the Response regulatory domain. Asp58 bears the 4-aspartylphosphate mark. The 193-residue stretch at 158–350 (LLSTEKLIIV…QRVMAHLATF (193 aa)) folds into the CheB-type methylesterase domain. Residues Ser170, His196, and Asp292 contribute to the active site.

It belongs to the CheB family. Phosphorylated by CheA. Phosphorylation of the N-terminal regulatory domain activates the methylesterase activity.

It localises to the cytoplasm. The catalysed reaction is [protein]-L-glutamate 5-O-methyl ester + H2O = L-glutamyl-[protein] + methanol + H(+). It carries out the reaction L-glutaminyl-[protein] + H2O = L-glutamyl-[protein] + NH4(+). Functionally, involved in chemotaxis. Part of a chemotaxis signal transduction system that modulates chemotaxis in response to various stimuli. Catalyzes the demethylation of specific methylglutamate residues introduced into the chemoreceptors (methyl-accepting chemotaxis proteins or MCP) by CheR. Also mediates the irreversible deamidation of specific glutamine residues to glutamic acid. This is Protein-glutamate methylesterase/protein-glutamine glutaminase 1 from Cupriavidus metallidurans (strain ATCC 43123 / DSM 2839 / NBRC 102507 / CH34) (Ralstonia metallidurans).